The sequence spans 460 residues: 3-isopropylmalate dehydratase large subunit (460 aa).

[4Fe-4S] cluster contacts are provided by Cys338, Cys398, and Cys401.

The protein belongs to the aconitase/IPM isomerase family. LeuC type 1 subfamily. Heterodimer of LeuC and LeuD. The cofactor is [4Fe-4S] cluster.

It catalyses the reaction (2R,3S)-3-isopropylmalate = (2S)-2-isopropylmalate. Its pathway is amino-acid biosynthesis; L-leucine biosynthesis; L-leucine from 3-methyl-2-oxobutanoate: step 2/4. Functionally, catalyzes the isomerization between 2-isopropylmalate and 3-isopropylmalate, via the formation of 2-isopropylmaleate. This chain is 3-isopropylmalate dehydratase large subunit, found in Streptococcus sanguinis (strain SK36).